Reading from the N-terminus, the 957-residue chain is Protein CRT10 (957 aa).

The tract at residues 695-719 (NSTEEDDVNSDPENEESGSSLTSFQ) is disordered. The segment covering 697–710 (TEEDDVNSDPENEE) has biased composition (acidic residues). Ser704 is subject to Phosphoserine.

Component of a cullin-RING ligase (CRL) composed of 4 subunits: the RING protein HRT1, the cullin RTT101, a linker protein MMS1, and the substrate receptor CRT10. Interacts with MMS1.

Its function is as follows. Substrate targeting component of a cullin-RING-based E3 ubiquitin-protein ligase complex RTT101(MMS1-CRT10). RTT101(MMS1-CRT10) may regulate nucleotide synthesis through transcriptional regulation of RNR genes encoding ribonucleotide reductases. The chain is Protein CRT10 (CRT10) from Saccharomyces cerevisiae (strain ATCC 204508 / S288c) (Baker's yeast).